We begin with the raw amino-acid sequence, 251 residues long: Small ribosomal subunit protein uS2 (251 aa).

Belongs to the universal ribosomal protein uS2 family.

This is Small ribosomal subunit protein uS2 from Deinococcus deserti (strain DSM 17065 / CIP 109153 / LMG 22923 / VCD115).